The following is a 361-amino-acid chain: D-alanine--D-alanine ligase (361 aa).

Residues K149 to Q353 form the ATP-grasp domain. An ATP-binding site is contributed by K176–E231. 3 residues coordinate Mg(2+): D308, E320, and N322.

It belongs to the D-alanine--D-alanine ligase family. The cofactor is Mg(2+). Mn(2+) serves as cofactor.

The protein resides in the cytoplasm. The enzyme catalyses 2 D-alanine + ATP = D-alanyl-D-alanine + ADP + phosphate + H(+). The protein operates within cell wall biogenesis; peptidoglycan biosynthesis. Functionally, cell wall formation. The sequence is that of D-alanine--D-alanine ligase from Corynebacterium efficiens (strain DSM 44549 / YS-314 / AJ 12310 / JCM 11189 / NBRC 100395).